The primary structure comprises 127 residues: Fluoride-specific ion channel FluC (127 aa).

4 consecutive transmembrane segments (helical) span residues 1-21, 39-59, 72-92, and 105-125; these read MPQG…GACL, FGTL…YGVI, LIGV…VETL, and ANVF…IELM. Na(+) contacts are provided by Gly79 and Thr82.

This sequence belongs to the fluoride channel Fluc/FEX (TC 1.A.43) family.

Its subcellular location is the cell inner membrane. The enzyme catalyses fluoride(in) = fluoride(out). With respect to regulation, na(+) is not transported, but it plays an essential structural role and its presence is essential for fluoride channel function. Its function is as follows. Fluoride-specific ion channel. Important for reducing fluoride concentration in the cell, thus reducing its toxicity. In Alteromonas mediterranea (strain DSM 17117 / CIP 110805 / LMG 28347 / Deep ecotype), this protein is Fluoride-specific ion channel FluC.